The following is a 301-amino-acid chain: Putative S-adenosyl-L-methionine-dependent methyltransferase BCG_0775c (301 aa).

S-adenosyl-L-methionine is bound by residues Asp-130 and 159–160 (DL).

This sequence belongs to the UPF0677 family.

Functionally, exhibits S-adenosyl-L-methionine-dependent methyltransferase activity. This is Putative S-adenosyl-L-methionine-dependent methyltransferase BCG_0775c from Mycobacterium bovis (strain BCG / Pasteur 1173P2).